The primary structure comprises 273 residues: Undecaprenyl-diphosphatase (273 aa).

7 consecutive transmembrane segments (helical) span residues 6-26 (SLLVAAILGVVEGLTEFLPVS), 45-65 (AKTFEVVIQLGSILAVVVMFW), 90-110 (LTLIHILLGMIPAVVLGLLFH), 116-136 (LFNPINVMYALVVGGLLLIAA), 190-210 (YAASEFSFLLAVPMMMGATAL), 222-242 (GDIPMFAVGFITAFVVALVAI), and 252-272 (ISFIPFAIYRFIVAAAVYVVF).

It belongs to the UppP family.

The protein resides in the cell inner membrane. The catalysed reaction is di-trans,octa-cis-undecaprenyl diphosphate + H2O = di-trans,octa-cis-undecaprenyl phosphate + phosphate + H(+). Functionally, catalyzes the dephosphorylation of undecaprenyl diphosphate (UPP). Confers resistance to bacitracin. The polypeptide is Undecaprenyl-diphosphatase (Escherichia fergusonii (strain ATCC 35469 / DSM 13698 / CCUG 18766 / IAM 14443 / JCM 21226 / LMG 7866 / NBRC 102419 / NCTC 12128 / CDC 0568-73)).